Here is a 764-residue protein sequence, read N- to C-terminus: Subtilisin-like protease SBT3.1 (764 aa).

The first 32 residues, 1 to 32 (MIQTLKTDSSFRLCFAAIAFGFVFIMNGKLSS), serve as a signal peptide directing secretion. Positions 33 to 120 (GTTPHEFPVY…LLENRKLGLQ (88 aa)) are cleaved as a propeptide — activation peptide. The region spanning 41-116 (VYIFYLGERK…EVIILLENRK (76 aa)) is the Inhibitor I9 domain. A glycan (N-linked (GlcNAc...) asparagine) is linked at Asn76. One can recognise a Peptidase S8 domain in the interval 124 to 610 (TWDYLGQFST…GGLVNLEKAT (487 aa)). The active-site Charge relay system is Asp156. Residue Asn216 is glycosylated (N-linked (GlcNAc...) asparagine). His230 serves as the catalytic Charge relay system. Asn245 and Asn374 each carry an N-linked (GlcNAc...) asparagine glycan. The active-site Charge relay system is the Ser541. N-linked (GlcNAc...) asparagine glycans are attached at residues Asn674, Asn711, and Asn747.

Belongs to the peptidase S8 family.

It localises to the secreted. This chain is Subtilisin-like protease SBT3.1, found in Arabidopsis thaliana (Mouse-ear cress).